Reading from the N-terminus, the 402-residue chain is Phosphopentomutase (402 aa).

Mn(2+)-binding residues include D10, D301, H306, D342, H343, and H354.

It belongs to the phosphopentomutase family. Mn(2+) serves as cofactor.

It is found in the cytoplasm. The enzyme catalyses 2-deoxy-alpha-D-ribose 1-phosphate = 2-deoxy-D-ribose 5-phosphate. It catalyses the reaction alpha-D-ribose 1-phosphate = D-ribose 5-phosphate. Its pathway is carbohydrate degradation; 2-deoxy-D-ribose 1-phosphate degradation; D-glyceraldehyde 3-phosphate and acetaldehyde from 2-deoxy-alpha-D-ribose 1-phosphate: step 1/2. Isomerase that catalyzes the conversion of deoxy-ribose 1-phosphate (dRib-1-P) and ribose 1-phosphate (Rib-1-P) to deoxy-ribose 5-phosphate (dRib-5-P) and ribose 5-phosphate (Rib-5-P), respectively. The chain is Phosphopentomutase from Aeromonas hydrophila subsp. hydrophila (strain ATCC 7966 / DSM 30187 / BCRC 13018 / CCUG 14551 / JCM 1027 / KCTC 2358 / NCIMB 9240 / NCTC 8049).